The chain runs to 32 residues: ilv operon leader peptide (32 aa).

In Edwardsiella tarda, this protein is ilv operon leader peptide (ilvL).